The following is a 262-amino-acid chain: Shikimate dehydrogenase (NADP(+)) (262 aa).

Shikimate contacts are provided by residues 15–17 (SRS) and Thr-62. Residue Lys-66 is the Proton acceptor of the active site. Glu-78 provides a ligand contact to NADP(+). The shikimate site is built by Asn-87 and Asp-102. Residues 126-130 (GAGGA), 150-155 (NRTLAR), and Met-214 contribute to the NADP(+) site. Tyr-216 lines the shikimate pocket. Residue Gly-236 coordinates NADP(+).

Belongs to the shikimate dehydrogenase family. Homodimer.

The catalysed reaction is shikimate + NADP(+) = 3-dehydroshikimate + NADPH + H(+). The protein operates within metabolic intermediate biosynthesis; chorismate biosynthesis; chorismate from D-erythrose 4-phosphate and phosphoenolpyruvate: step 4/7. Involved in the biosynthesis of the chorismate, which leads to the biosynthesis of aromatic amino acids. Catalyzes the reversible NADPH linked reduction of 3-dehydroshikimate (DHSA) to yield shikimate (SA). The sequence is that of Shikimate dehydrogenase (NADP(+)) from Acinetobacter baumannii (strain SDF).